The sequence spans 261 residues: Acetylglutamate kinase (261 aa).

Residues 41-42 (GG), R63, and N157 contribute to the substrate site.

This sequence belongs to the acetylglutamate kinase family. ArgB subfamily.

It is found in the cytoplasm. The enzyme catalyses N-acetyl-L-glutamate + ATP = N-acetyl-L-glutamyl 5-phosphate + ADP. Its pathway is amino-acid biosynthesis; L-arginine biosynthesis; N(2)-acetyl-L-ornithine from L-glutamate: step 2/4. Catalyzes the ATP-dependent phosphorylation of N-acetyl-L-glutamate. The polypeptide is Acetylglutamate kinase (Koribacter versatilis (strain Ellin345)).